A 305-amino-acid chain; its full sequence is Ribose import binding protein RbsB (305 aa).

A signal peptide spans 1–18 (MKKAVSVILTLSLFLLTA). Cysteine 19 carries the N-palmitoyl cysteine lipid modification. The S-diacylglycerol cysteine moiety is linked to residue cysteine 19.

This sequence belongs to the bacterial solute-binding protein 2 family. As to quaternary structure, the complex is composed of an ATP-binding protein (RbsA), two transmembrane proteins (RbsC) and a solute-binding protein (RbsB). Interacts with FloT.

It is found in the cell membrane. Its subcellular location is the membrane raft. Its function is as follows. Part of the ABC transporter complex RbsABC involved in ribose import. Binds ribose. In Bacillus subtilis (strain 168), this protein is Ribose import binding protein RbsB (rbsB).